A 763-amino-acid chain; its full sequence is High glucose sensor RGT2 (763 aa).

A disordered region spans residues 1–28 (MNDSQNCLRQREENSHLNPGNDFGHHQG). Residues 1-99 (MNDSQNCLRQ…PLPLRSNVMS (99 aa)) lie on the Cytoplasmic side of the membrane. A helical transmembrane segment spans residues 100–120 (VLVGIFVAVGGFLFGYDTGLI). At 121-144 (NSITDMPYVKTYIAPNHSYFTTSQ) the chain is on the extracellular side. Asn-136 is a glycosylation site (N-linked (GlcNAc...) asparagine). Residues 145 to 165 (IAILVSFLSLGTFFGALIAPY) form a helical membrane-spanning segment. At 166–175 (ISDSYGRKPT) the chain is on the cytoplasmic side. The chain crosses the membrane as a helical span at residues 176 to 196 (IMFSTAVIFSIGNSLQVASGG). A topological domain (extracellular) is located at residue Leu-197. The chain crosses the membrane as a helical span at residues 198 to 218 (VLLIVGRVISGIGIGIISAVV). At 219–231 (PLYQAEAAQKNLR) the chain is on the cytoplasmic side. The helical transmembrane segment at 232-252 (GAIISSYQWAITIGLLVSSAV) threads the bilayer. Residues 253 to 266 (SQGTHSKNGPSSYR) lie on the Extracellular side of the membrane. The helical transmembrane segment at 267–287 (IPIGLQYVWSSILAVGMIFLP) threads the bilayer. Topologically, residues 288 to 357 (ESPRYYVLKD…SENRPKQILR (70 aa)) are cytoplasmic. The helical transmembrane segment at 358-378 (IFTGIAIQAFQQASGINFIFY) threads the bilayer. The Extracellular portion of the chain corresponds to 379-393 (YGVNFFNNTGVDNSY). Asn-385 is a glycosylation site (N-linked (GlcNAc...) asparagine). The chain crosses the membrane as a helical span at residues 394 to 414 (LVSFISYAVNVAFSIPGMYLV). The Cytoplasmic segment spans residues 415 to 421 (DRIGRRP). A helical membrane pass occupies residues 422-442 (VLLAGGVIMAIANLVIAIVGV). Over 443–452 (SEGKTVVASK) the chain is Extracellular. The helical transmembrane segment at 453 to 473 (IMIAFICLFIAAFSATWGGVV) threads the bilayer. Topologically, residues 474–491 (WVVSAELYPLGVRSKCTA) are cytoplasmic. A helical membrane pass occupies residues 492–512 (ICAAANWLVNFTCALITPYIV). Topologically, residues 513 to 524 (DVGSHTSSMGPK) are extracellular. A helical membrane pass occupies residues 525–545 (IFFIWGGLNVVAVIVVYFAVY). The Cytoplasmic portion of the chain corresponds to 546-763 (ETRGLTLEEI…SKHSQYTSPQ (218 aa)). The segment covering 725-737 (SSTTSNDTSFSPS) has biased composition (low complexity). Residues 725–763 (SSTTSNDTSFSPSHNSNARTSSNWTSDLASKHSQYTSPQ) form a disordered region. Residues 738–763 (HNSNARTSSNWTSDLASKHSQYTSPQ) show a composition bias toward polar residues.

This sequence belongs to the major facilitator superfamily. Sugar transporter (TC 2.A.1.1) family. As to quaternary structure, interacts with YCK1. Interacts with MTH1 and STD1. Phosphorylated in the C-terminal tail on Yck consensus sites in a yeast casein kinases YCK1 and YCK2 (Yck)-dependent manner. This phosphorylation is required for interaction with HXT corepressors MTH1 and STD1 and ultimately HXT expression.

It is found in the cell membrane. In terms of biological role, low-affinity high glucose sensor that is part of the sensor/receptor-repressor (SSR) glucose-signaling pathway, which detects extracellular glucose and induces expression of glucose transporters that bring glucose into the cell. The transporter-like sensor generates an intracellular signal in the presence of high levels of glucose to promote high glucose-induced expression of HXT1. Binding of glucose to the RGT2 transmembrane domain activates a downstream signaling cascade, leading to phosphorylation of the RGT1 corepressors MTH1 and STD1, targeting them for SCF(Grr1)-dependent ubiquitination and degradation. Depletion of the corepressors robs RGT1 of its ability to repress expression of HXT genes, leading to accumulation of glucose transporters in the plasma membrane. Even though RGT2 is similar to glucose transporters, it appears to be unable to transport glucose. This Saccharomyces cerevisiae (strain ATCC 204508 / S288c) (Baker's yeast) protein is High glucose sensor RGT2.